Reading from the N-terminus, the 362-residue chain is DNA replication and repair protein RecF (362 aa).

ATP is bound at residue 30–37; sequence GLNAQGKS.

This sequence belongs to the RecF family.

The protein resides in the cytoplasm. In terms of biological role, the RecF protein is involved in DNA metabolism; it is required for DNA replication and normal SOS inducibility. RecF binds preferentially to single-stranded, linear DNA. It also seems to bind ATP. The polypeptide is DNA replication and repair protein RecF (Thermoanaerobacter pseudethanolicus (strain ATCC 33223 / 39E) (Clostridium thermohydrosulfuricum)).